Here is a 375-residue protein sequence, read N- to C-terminus: Flagellar P-ring protein (375 aa).

The first 23 residues, 1–23 (MFNQSFLKYMLFGFFLFSFHAHA), serve as a signal peptide directing secretion.

It belongs to the FlgI family. The basal body constitutes a major portion of the flagellar organelle and consists of four rings (L,P,S, and M) mounted on a central rod.

The protein resides in the bacterial flagellum basal body. Assembles around the rod to form the L-ring and probably protects the motor/basal body from shearing forces during rotation. This is Flagellar P-ring protein from Buchnera aphidicola subsp. Baizongia pistaciae (strain Bp).